Reading from the N-terminus, the 691-residue chain is DNA ligase (691 aa).

NAD(+) contacts are provided by residues aspartate 41–aspartate 45, serine 90–leucine 91, and glutamate 130. The N6-AMP-lysine intermediate role is filled by lysine 132. NAD(+) contacts are provided by arginine 153, glutamate 190, lysine 307, and lysine 331. Positions 425, 428, 443, and 449 each coordinate Zn(2+). The 82-residue stretch at alanine 610–proline 691 folds into the BRCT domain.

It belongs to the NAD-dependent DNA ligase family. LigA subfamily. Requires Mg(2+) as cofactor. The cofactor is Mn(2+).

It catalyses the reaction NAD(+) + (deoxyribonucleotide)n-3'-hydroxyl + 5'-phospho-(deoxyribonucleotide)m = (deoxyribonucleotide)n+m + AMP + beta-nicotinamide D-nucleotide.. DNA ligase that catalyzes the formation of phosphodiester linkages between 5'-phosphoryl and 3'-hydroxyl groups in double-stranded DNA using NAD as a coenzyme and as the energy source for the reaction. It is essential for DNA replication and repair of damaged DNA. This is DNA ligase from Burkholderia cenocepacia (strain ATCC BAA-245 / DSM 16553 / LMG 16656 / NCTC 13227 / J2315 / CF5610) (Burkholderia cepacia (strain J2315)).